A 535-amino-acid polypeptide reads, in one-letter code: Calcium-dependent protein kinase 1 (535 aa).

Residues 1–34 (MGCNQSKSANDVRGNKVNNVNSKKKNNKREDIND) are disordered. Residue Gly2 is the site of N-myristoyl glycine attachment. A lipid anchor (S-palmitoyl cysteine) is attached at Cys3. A Protein kinase domain is found at 57–324 (YFKVRKLGSG…AEEALNSRWI (268 aa)). Residues 63 to 71 (LGSGAYGEV) and Lys86 contribute to the ATP site. Ser65 carries the post-translational modification Phosphoserine. Position 117 is a phosphoserine (Ser117). Asp190 acts as the Proton acceptor in catalysis. A phosphoserine mark is found at Ser216 and Ser219. Phosphothreonine is present on Thr230. A Phosphoserine modification is found at Ser334. A J domain autoinhibitory motif motif is present at residues 345 to 352 (NMRKFEGS). The j domain stretch occupies residues 345 to 363 (NMRKFEGSQKLAQAAILFI). Positions 353 to 363 (QKLAQAAILFI) match the J domain interacts with the EF-hand domains motif. 4 EF-hand domains span residues 371 to 406 (EERKELTDIFKKLDKNGDGQLDKKELIEGYNVLRNF), 415 to 450 (NVEEEVDNILKEVDFDKNGYIEYSEFISVCMDKQIL), 451 to 486 (FSEERLRRAFNLFDTDKSGKITKEELANVIIRGFYF), and 497 to 532 (VSEKTWNDVLGEADQNKDNMIDFDEFVSMMHKICDN). Positions 384, 386, 388, 390, 395, 428, 430, 432, 434, 439, 464, 466, 468, 470, 475, 510, 512, 514, 516, and 521 each coordinate Ca(2+).

Belongs to the protein kinase superfamily. Ser/Thr protein kinase family. CDPK subfamily. As to quaternary structure, monomer. Mg(2+) is required as a cofactor. In terms of processing, myristoylated. Myristoylation and palmitoylation are required for the localization to the parasitophorous vacuole membrane. Palmitoylated. Palmitoylation increases in merozoites in response to low level of extracellular K(+) in the host blood. Myristoylation and palmitoylation are required for the localization to the parasitophorous vacuole membrane. Post-translationally, phosphorylation at Thr-230 may regulate CDPK1 kinase activity. Phosphorylation increases in response to an increase in intracellular Ca(2+) levels. Autophosphorylated in vitro. Autophosphorylation does not affect membrane localization in vitro.

Its subcellular location is the membrane. It is found in the cell membrane. The protein localises to the parasitophorous vacuole membrane. It localises to the cytoplasm. The protein resides in the cell projection. Its subcellular location is the cilium. It is found in the flagellum. The protein localises to the host cell membrane. It carries out the reaction L-seryl-[protein] + ATP = O-phospho-L-seryl-[protein] + ADP + H(+). It catalyses the reaction L-threonyl-[protein] + ATP = O-phospho-L-threonyl-[protein] + ADP + H(+). Its activity is regulated as follows. Activated by calcium. Upon calcium binding to the EF-hand domains, the C-terminus of the junction domain (J domain) undergoes a conformational change which results in the dissociation of the pseudo-substrate inhibitory motif from the catalytic domain. This, in turn may facilitate the autophosphorylation of the activation loop at Thr-230, which leads to the kinase activation. In terms of biological role, calcium-dependent protein kinase which acts as a sensor and effector of intracellular Ca(2+) levels probably in part downstream of cGMP-activated PKG kinase. During the liver stage, involved in sporozoite motility and thus in sporozoite invasion of host hepatocytes, probably together with CDPK4 and CDPK5. In the mosquito midgut and during the last stage of male gamete exflagellation, may play a role in the rupture of the host erythrocyte membrane. In the mosquito midgut, required for the differentiation of the zygote into the ookinete by promoting the translational activation of a subset of repressed mRNAs; these mRNAs are kept repressed in the zygote by the DOZI- or CITH-containing mRNP complexes. Dispensable during the asexual blood stage. The sequence is that of Calcium-dependent protein kinase 1 from Plasmodium yoelii yoelii.